Consider the following 172-residue polypeptide: Shikimate kinase (172 aa).

11–16 (GSGKTT) is an ATP binding site. Residue T15 coordinates Mg(2+). 3 residues coordinate substrate: D33, R57, and G79. An ATP-binding site is contributed by R117. Position 136 (R136) interacts with substrate.

Belongs to the shikimate kinase family. Monomer. Mg(2+) serves as cofactor.

The protein resides in the cytoplasm. It carries out the reaction shikimate + ATP = 3-phosphoshikimate + ADP + H(+). It functions in the pathway metabolic intermediate biosynthesis; chorismate biosynthesis; chorismate from D-erythrose 4-phosphate and phosphoenolpyruvate: step 5/7. Catalyzes the specific phosphorylation of the 3-hydroxyl group of shikimic acid using ATP as a cosubstrate. This is Shikimate kinase from Caldicellulosiruptor saccharolyticus (strain ATCC 43494 / DSM 8903 / Tp8T 6331).